A 133-amino-acid polypeptide reads, in one-letter code: DNA-directed RNA polymerases I, II, and III subunit rpabc2 (133 aa).

Acidic residues predominate over residues 1 to 32 (MADFEGGGDDGGYEEFDEGGGFEEEYVEETET). A disordered region spans residues 1-55 (MADFEGGGDDGGYEEFDEGGGFEEEYVEETETTEAYTDIIDPSADANTAEAGRIP).

Belongs to the archaeal Rpo6/eukaryotic RPB6 RNA polymerase subunit family. As to quaternary structure, component of the RNA polymerase I (Pol I), RNA polymerase II (Pol II) and RNA polymerase III (Pol III) complexes consisting of at least 13, 12 and 17 subunits, respectively.

The protein resides in the nucleus. DNA-dependent RNA polymerases catalyze the transcription of DNA into RNA using the four ribonucleoside triphosphates as substrates. Common component of RNA polymerases I, II and III which synthesize ribosomal RNA precursors, mRNA precursors and many functional non-coding RNAs, and small RNAs, such as 5S rRNA and tRNAs, respectively. Pol II is the central component of the basal RNA polymerase II transcription machinery. Pols are composed of mobile elements that move relative to each other. In Pol II, RPB6 is part of the clamp element and together with parts of RPB1 and RPB2 forms a pocket to which the RPB4-RPB7 subcomplex binds. This is DNA-directed RNA polymerases I, II, and III subunit rpabc2 (polr2f) from Dictyostelium discoideum (Social amoeba).